The primary structure comprises 150 residues: Arginine repressor (150 aa).

Belongs to the ArgR family.

Its subcellular location is the cytoplasm. It functions in the pathway amino-acid biosynthesis; L-arginine biosynthesis [regulation]. Regulates arginine biosynthesis genes. The chain is Arginine repressor from Clostridium botulinum (strain ATCC 19397 / Type A).